We begin with the raw amino-acid sequence, 156 residues long: MDITLTIFAQALAFAGLIWIVATKIWPPLLQAIEERQQKIAEGLAAADRSQKDLAQAQEKVNEALKDARTKANEIIDQAHARANQIIEAAKLEAIAEANRQKDLAQTEIDASATRAREELRKQVSVLAVSGAEKLLKREIDANAHKALLDELAAEI.

The helical transmembrane segment at 3–23 threads the bilayer; the sequence is ITLTIFAQALAFAGLIWIVAT.

It belongs to the ATPase B chain family. F-type ATPases have 2 components, F(1) - the catalytic core - and F(0) - the membrane proton channel. F(1) has five subunits: alpha(3), beta(3), gamma(1), delta(1), epsilon(1). F(0) has three main subunits: a(1), b(2) and c(10-14). The alpha and beta chains form an alternating ring which encloses part of the gamma chain. F(1) is attached to F(0) by a central stalk formed by the gamma and epsilon chains, while a peripheral stalk is formed by the delta and b chains.

It is found in the cell inner membrane. Its function is as follows. F(1)F(0) ATP synthase produces ATP from ADP in the presence of a proton or sodium gradient. F-type ATPases consist of two structural domains, F(1) containing the extramembraneous catalytic core and F(0) containing the membrane proton channel, linked together by a central stalk and a peripheral stalk. During catalysis, ATP synthesis in the catalytic domain of F(1) is coupled via a rotary mechanism of the central stalk subunits to proton translocation. In terms of biological role, component of the F(0) channel, it forms part of the peripheral stalk, linking F(1) to F(0). This Xanthomonas axonopodis pv. citri (strain 306) protein is ATP synthase subunit b.